Here is a 444-residue protein sequence, read N- to C-terminus: 23S rRNA (uracil(1939)-C(5))-methyltransferase RlmD (444 aa).

Residues 11–70 (NSIKNHILKNIKVEKLDHRGRGLAYFQNKPLFIDGALAGELLEVQIVESKKRYSKGKIKK) form the TRAM domain. [4Fe-4S] cluster contacts are provided by Cys-83, Cys-89, Cys-92, and Cys-171. Residues Gln-277, Phe-306, Asn-311, Glu-327, Asp-354, and Asp-376 each contribute to the S-adenosyl-L-methionine site. The active-site Nucleophile is Cys-402.

This sequence belongs to the class I-like SAM-binding methyltransferase superfamily. RNA M5U methyltransferase family. RlmD subfamily.

It carries out the reaction uridine(1939) in 23S rRNA + S-adenosyl-L-methionine = 5-methyluridine(1939) in 23S rRNA + S-adenosyl-L-homocysteine + H(+). Catalyzes the formation of 5-methyl-uridine at position 1939 (m5U1939) in 23S rRNA. The protein is 23S rRNA (uracil(1939)-C(5))-methyltransferase RlmD of Psychromonas ingrahamii (strain DSM 17664 / CCUG 51855 / 37).